Consider the following 1255-residue polypeptide: TBC1 domain family member 1 (1255 aa).

Residue Ser-146 is modified to Phosphoserine. Residues 208–228 (RTDWEAPTGQPSAPGPRPMRK) form a disordered region. Ser-229 is modified (phosphoserine; by PKB/AKT1). Phosphoserine; by AMPK is present on Ser-231. One can recognise a PID domain in the interval 238 to 398 (LAFRKEFQDA…LHKLCERIEG (161 aa)). Ser-489 carries the phosphoserine; by PKB/AKT1 modification. Ser-497 is modified (phosphoserine). Thr-499 is modified (phosphothreonine; by PKB/AKT1). Phosphoserine is present on residues Ser-501, Ser-519, Ser-521, Ser-559, Ser-560, Ser-564, Ser-565, and Ser-579. Disordered stretches follow at residues 509–544 (GNKA…MGDK) and 559–581 (SSDD…LSPQ). Positions 519–539 (SASVDLDSSTSSTLSNTSKEL) are enriched in low complexity. Thr-590 carries the phosphothreonine modification. Disordered stretches follow at residues 595-614 (PVEC…VSQR) and 621-681 (SVST…GNAV). Ser-608 carries the phosphoserine modification. A Phosphoserine; by PKB/AKT1 modification is found at Ser-621. A phosphoserine mark is found at Ser-660 and Ser-661. Polar residues predominate over residues 670–679 (HNSSGEQSGN). Ser-697 bears the Phosphoserine; by PKB/AKT1 mark. Ser-698 and Ser-699 each carry phosphoserine. Ser-700 bears the Phosphoserine; by AMPK mark. Positions 764–786 (DSPSRYEDYSELGELPPRSPLEP) are disordered. A phosphoserine mark is found at Ser-782 and Ser-1028. In terms of domain architecture, Rab-GAP TBC spans 887–1081 (GVPRHHRGEI…RVFDMIFLQG (195 aa)). A Phosphotyrosine modification is found at Tyr-1039. Thr-1218 carries the post-translational modification Phosphothreonine. The segment at 1233–1255 (LRRQSARPSTPEPDCTQLEPTGD) is disordered.

As to quaternary structure, interacts with APPL2 (via BAR domain); interaction is dependent of TBC1D1 phosphorylation at Ser-229; interaction diminishes the phosphorylation of TBC1D1 at Thr-590, resulting in inhibition of SLC2A4/GLUT4 translocation and glucose uptake. Post-translationally, insulin-stimulated phosphorylation by AKT family kinases stimulates SLC2A4/GLUT4 translocation. As to expression, expressed in highest levels in hematopoietic cells, testis and kidney.

It is found in the nucleus. May act as a GTPase-activating protein for Rab family protein(s). May play a role in the cell cycle and differentiation of various tissues. Involved in the trafficking and translocation of GLUT4-containing vesicles and insulin-stimulated glucose uptake into cells. This chain is TBC1 domain family member 1 (Tbc1d1), found in Mus musculus (Mouse).